The primary structure comprises 1406 residues: Carboxypeptidase D (1406 aa).

The signal sequence occupies residues 1 to 25 (MPTLGLLFASIGIAVLAMGVPHCRG). The Extracellular portion of the chain corresponds to 26–1312 (YTIKEDESFL…VNEHVFGLPR (1287 aa)). Peptidase M14 domains follow at residues 39–335 (HYAS…LRQA) and 455–760 (EHHN…IEQV). Zn(2+) contacts are provided by His-101 and Glu-104. Asn-133 carries N-linked (GlcNAc...) asparagine glycosylation. 3 disulfides stabilise this stretch: Cys-156–Cys-309, Cys-236–Cys-237, and Cys-268–Cys-308. Residue His-217 participates in Zn(2+) binding. The N-linked (GlcNAc...) asparagine glycan is linked to Asn-269. Glu-305 functions as the Proton donor/acceptor in the catalytic mechanism. A glycan (N-linked (GlcNAc...) asparagine) is linked at Asn-458. Residues His-517 and Glu-520 each contribute to the Zn(2+) site. Asn-549 and Asn-612 each carry an N-linked (GlcNAc...) asparagine glycan. Residue His-626 coordinates Zn(2+). Asn-652 is a glycosylation site (N-linked (GlcNAc...) asparagine). Catalysis depends on Glu-730, which acts as the Proton donor/acceptor. N-linked (GlcNAc...) asparagine glycosylation is found at Asn-787, Asn-808, Asn-981, Asn-1152, and Asn-1251. Residues 863 to 1121 (RYHTNPQVRA…DKIKNFLALV (259 aa)) form the Peptidase M14 3 domain. A helical membrane pass occupies residues 1313–1333 (FLFILCASVLIIVGVIVCVLC). Topologically, residues 1334–1406 (AQFWFYRRHR…TNYSFIIQAA (73 aa)) are cytoplasmic. Positions 1343 to 1345 (RGD) match the Cell attachment site motif. Ser-1380 is modified (phosphoserine).

The protein belongs to the peptidase M14 family. Monomer. Requires Zn(2+) as cofactor. In terms of tissue distribution, expressed in the central nervous system (CNS) of adults and larvae. In the adult brain, increased levels of expression in the mushroom body (MB) and neurosecretory cells.

Its subcellular location is the membrane. It is found in the cytoplasm. The protein localises to the perinuclear region. The protein resides in the golgi apparatus. It localises to the trans-Golgi network. Its subcellular location is the secreted. It catalyses the reaction Releases C-terminal Arg and Lys from polypeptides.. Its activity is regulated as follows. Inhibited by 2-guanidinoethylmercaptosuccinic acid (GEMSA). In terms of biological role, metallocarboxypeptidase that catalyzes the release of C-terminal arginine or lysine residues from peptides and proteins. Functionally important for processing a broad range of proteins including growth factors, peptide hormones (such as Akh) and neuropeptides. Consequently, it is involved in a wide range of processes including viability, memory formation, locomotive activity, wing formation, and peptide-regulated behaviors such as starvation-induced hyperactivity, appetitive gustatory preference, and cold and ethanol sensitivity. Key enzyme in neuropeptide processing. Involved in regulation of memory formation, possibly via the insulin pathway in neurosecretory cells. The chain is Carboxypeptidase D from Drosophila melanogaster (Fruit fly).